Reading from the N-terminus, the 89-residue chain is Small ribosomal subunit protein uS14A (89 aa).

The protein belongs to the universal ribosomal protein uS14 family. In terms of assembly, part of the 30S ribosomal subunit. Contacts proteins S3 and S10.

In terms of biological role, binds 16S rRNA, required for the assembly of 30S particles and may also be responsible for determining the conformation of the 16S rRNA at the A site. The chain is Small ribosomal subunit protein uS14A from Levilactobacillus brevis (strain ATCC 367 / BCRC 12310 / CIP 105137 / JCM 1170 / LMG 11437 / NCIMB 947 / NCTC 947) (Lactobacillus brevis).